We begin with the raw amino-acid sequence, 183 residues long: MGQQNSKLTKSDIEFIGKNSNFSKEEVANIYGEFKKFDKDGNGSFDRKEFVLFFKSKLPNYPEDNLNKLFDAFDSDKSNTIDFKELTVALSIIGKGSAEDKLKVLFDIYDKDKSGILEKKEVDEMIALMKNVGVSLGKSPGDIELFIVKLFEKIDKDKNNLISREEFLTEGARSPSLLTLLGI.

The N-myristoyl glycine moiety is linked to residue glycine 2. EF-hand domains follow at residues 25-60, 61-96, 97-132, and 142-177; these read EEVANIYGEFKKFDKDGNGSFDRKEFVLFFKSKLPN, YPEDNLNKLFDAFDSDKSNTIDFKELTVALSIIGKG, SAEDKLKVLFDIYDKDKSGILEKKEVDEMIALMKNV, and DIELFIVKLFEKIDKDKNNLISREEFLTEGARSPSL. Ca(2+) contacts are provided by aspartate 74, aspartate 76, serine 78, threonine 80, glutamate 85, aspartate 110, aspartate 112, serine 114, glutamate 121, aspartate 155, aspartate 157, asparagine 159, and glutamate 166.

The protein belongs to the recoverin family.

The sequence is that of Calcium-binding protein M (cbpM) from Dictyostelium discoideum (Social amoeba).